Reading from the N-terminus, the 195-residue chain is Imidazoleglycerol-phosphate dehydratase (195 aa).

Belongs to the imidazoleglycerol-phosphate dehydratase family.

Its subcellular location is the cytoplasm. The catalysed reaction is D-erythro-1-(imidazol-4-yl)glycerol 3-phosphate = 3-(imidazol-4-yl)-2-oxopropyl phosphate + H2O. It functions in the pathway amino-acid biosynthesis; L-histidine biosynthesis; L-histidine from 5-phospho-alpha-D-ribose 1-diphosphate: step 6/9. This chain is Imidazoleglycerol-phosphate dehydratase, found in Deinococcus deserti (strain DSM 17065 / CIP 109153 / LMG 22923 / VCD115).